The sequence spans 54 residues: Small ribosomal subunit protein uS14 (54 aa).

4 residues coordinate Zn(2+): Cys-19, Cys-22, Cys-37, and Cys-40.

It belongs to the universal ribosomal protein uS14 family. Zinc-binding uS14 subfamily. As to quaternary structure, part of the 30S ribosomal subunit. The cofactor is Zn(2+).

Its function is as follows. Binds 16S rRNA, required for the assembly of 30S particles. This Saccharolobus solfataricus (strain ATCC 35092 / DSM 1617 / JCM 11322 / P2) (Sulfolobus solfataricus) protein is Small ribosomal subunit protein uS14.